Here is a 124-residue protein sequence, read N- to C-terminus: MAQGSDNNDTSYTKSPSPGNKQGSSDDMRKVMRREKNRIAAQKSRMRQTQKADSLHLESESLEKENAALRKEVKRLTEEAKYLSTVLSNHEPLCTGLSGASPELLYGAHHGAFHQHISVPHYPL.

Residues 1–23 show a composition bias toward polar residues; that stretch reads MAQGSDNNDTSYTKSPSPGNKQG. The tract at residues 1-60 is disordered; that stretch reads MAQGSDNNDTSYTKSPSPGNKQGSSDDMRKVMRREKNRIAAQKSRMRQTQKADSLHLESE. Residues 27–90 form the bZIP domain; it reads DMRKVMRREK…KYLSTVLSNH (64 aa). Residues 29-51 are basic motif; the sequence is RKVMRREKNRIAAQKSRMRQTQK. The leucine-zipper stretch occupies residues 55 to 83; sequence LHLESESLEKENAALRKEVKRLTEEAKYL.

It belongs to the bZIP family.

Its subcellular location is the nucleus. The protein localises to the cytoplasm. AP-1 family transcription factor that controls the differentiation of lineage-specific cells in the immune system: specifically mediates the differentiation of T-helper 17 cells (Th17), follicular T-helper cells (TfH), CD8(+) dendritic cells and class-switch recombination (CSR) in B-cells. This chain is Basic leucine zipper transcriptional factor ATF-like (batf), found in Danio rerio (Zebrafish).